We begin with the raw amino-acid sequence, 65 residues long: Large ribosomal subunit protein bL31 (65 aa).

Zn(2+) contacts are provided by cysteine 16, cysteine 18, cysteine 36, and cysteine 39.

Belongs to the bacterial ribosomal protein bL31 family. Type A subfamily. As to quaternary structure, part of the 50S ribosomal subunit. Zn(2+) is required as a cofactor.

Binds the 23S rRNA. The chain is Large ribosomal subunit protein bL31 from Geotalea daltonii (strain DSM 22248 / JCM 15807 / FRC-32) (Geobacter daltonii).